The chain runs to 150 residues: D-aminoacyl-tRNA deacylase (150 aa).

A Gly-cisPro motif, important for rejection of L-amino acids motif is present at residues 136–137; that stretch reads GP.

Belongs to the DTD family. In terms of assembly, homodimer.

Its subcellular location is the cytoplasm. The enzyme catalyses glycyl-tRNA(Ala) + H2O = tRNA(Ala) + glycine + H(+). It carries out the reaction a D-aminoacyl-tRNA + H2O = a tRNA + a D-alpha-amino acid + H(+). Its function is as follows. An aminoacyl-tRNA editing enzyme that deacylates mischarged D-aminoacyl-tRNAs. Also deacylates mischarged glycyl-tRNA(Ala), protecting cells against glycine mischarging by AlaRS. Acts via tRNA-based rather than protein-based catalysis; rejects L-amino acids rather than detecting D-amino acids in the active site. By recycling D-aminoacyl-tRNA to D-amino acids and free tRNA molecules, this enzyme counteracts the toxicity associated with the formation of D-aminoacyl-tRNA entities in vivo and helps enforce protein L-homochirality. This Staphylococcus epidermidis (strain ATCC 35984 / DSM 28319 / BCRC 17069 / CCUG 31568 / BM 3577 / RP62A) protein is D-aminoacyl-tRNA deacylase.